A 614-amino-acid chain; its full sequence is Phosphomethylpyrimidine synthase (614 aa).

Substrate contacts are provided by residues N226, M255, Y284, H320, 340–342, 381–384, and E420; these read SRG and DGLR. H424 is a Zn(2+) binding site. Residue Y447 participates in substrate binding. H488 contacts Zn(2+). [4Fe-4S] cluster is bound by residues C568, C571, and C576.

Belongs to the ThiC family. Homodimer. It depends on [4Fe-4S] cluster as a cofactor.

It carries out the reaction 5-amino-1-(5-phospho-beta-D-ribosyl)imidazole + S-adenosyl-L-methionine = 4-amino-2-methyl-5-(phosphooxymethyl)pyrimidine + CO + 5'-deoxyadenosine + formate + L-methionine + 3 H(+). It participates in cofactor biosynthesis; thiamine diphosphate biosynthesis. Catalyzes the synthesis of the hydroxymethylpyrimidine phosphate (HMP-P) moiety of thiamine from aminoimidazole ribotide (AIR) in a radical S-adenosyl-L-methionine (SAM)-dependent reaction. The chain is Phosphomethylpyrimidine synthase from Acidovorax sp. (strain JS42).